A 159-amino-acid polypeptide reads, in one-letter code: Phosphopantetheine adenylyltransferase (159 aa).

Thr10 provides a ligand contact to substrate. Residues 10–11 (TF) and His18 contribute to the ATP site. Substrate is bound by residues Lys42, Met74, and Arg88. ATP is bound by residues 89–91 (GLR), Glu99, and 124–130 (WSFISSS).

It belongs to the bacterial CoaD family. Homohexamer. Mg(2+) serves as cofactor.

Its subcellular location is the cytoplasm. It catalyses the reaction (R)-4'-phosphopantetheine + ATP + H(+) = 3'-dephospho-CoA + diphosphate. Its pathway is cofactor biosynthesis; coenzyme A biosynthesis; CoA from (R)-pantothenate: step 4/5. Its function is as follows. Reversibly transfers an adenylyl group from ATP to 4'-phosphopantetheine, yielding dephospho-CoA (dPCoA) and pyrophosphate. The polypeptide is Phosphopantetheine adenylyltransferase (Yersinia pseudotuberculosis serotype O:3 (strain YPIII)).